The primary structure comprises 22 residues: MSPLKAVAVLTGADVKGVVQFT.

Belongs to the Cu-Zn superoxide dismutase family. In terms of assembly, homodimer. It depends on Cu cation as a cofactor. Requires Zn(2+) as cofactor. In terms of tissue distribution, dominant isozyme in roots.

Its subcellular location is the cytoplasm. It catalyses the reaction 2 superoxide + 2 H(+) = H2O2 + O2. In terms of biological role, destroys radicals which are normally produced within the cells and which are toxic to biological systems. This chain is Superoxide dismutase [Cu-Zn] 2, found in Picea abies (Norway spruce).